The primary structure comprises 283 residues: Bifunctional protein FolD 2 (283 aa).

NADP(+) contacts are provided by residues 165–167 (GAS), Ser190, and Ile231.

This sequence belongs to the tetrahydrofolate dehydrogenase/cyclohydrolase family. Homodimer.

It carries out the reaction (6R)-5,10-methylene-5,6,7,8-tetrahydrofolate + NADP(+) = (6R)-5,10-methenyltetrahydrofolate + NADPH. The enzyme catalyses (6R)-5,10-methenyltetrahydrofolate + H2O = (6R)-10-formyltetrahydrofolate + H(+). It functions in the pathway one-carbon metabolism; tetrahydrofolate interconversion. Functionally, catalyzes the oxidation of 5,10-methylenetetrahydrofolate to 5,10-methenyltetrahydrofolate and then the hydrolysis of 5,10-methenyltetrahydrofolate to 10-formyltetrahydrofolate. The polypeptide is Bifunctional protein FolD 2 (Bordetella pertussis (strain Tohama I / ATCC BAA-589 / NCTC 13251)).